A 140-amino-acid chain; its full sequence is Large ribosomal subunit protein uL11 (140 aa).

This sequence belongs to the universal ribosomal protein uL11 family. Part of the ribosomal stalk of the 50S ribosomal subunit. Interacts with L10 and the large rRNA to form the base of the stalk. L10 forms an elongated spine to which L12 dimers bind in a sequential fashion forming a multimeric L10(L12)X complex. One or more lysine residues are methylated.

Its function is as follows. Forms part of the ribosomal stalk which helps the ribosome interact with GTP-bound translation factors. This is Large ribosomal subunit protein uL11 from Nitratidesulfovibrio vulgaris (strain ATCC 29579 / DSM 644 / CCUG 34227 / NCIMB 8303 / VKM B-1760 / Hildenborough) (Desulfovibrio vulgaris).